Here is a 252-residue protein sequence, read N- to C-terminus: 2-succinyl-6-hydroxy-2,4-cyclohexadiene-1-carboxylate synthase (252 aa).

Belongs to the AB hydrolase superfamily. MenH family. In terms of assembly, monomer.

It catalyses the reaction 5-enolpyruvoyl-6-hydroxy-2-succinyl-cyclohex-3-ene-1-carboxylate = (1R,6R)-6-hydroxy-2-succinyl-cyclohexa-2,4-diene-1-carboxylate + pyruvate. It participates in quinol/quinone metabolism; 1,4-dihydroxy-2-naphthoate biosynthesis; 1,4-dihydroxy-2-naphthoate from chorismate: step 3/7. The protein operates within quinol/quinone metabolism; menaquinone biosynthesis. Its function is as follows. Catalyzes a proton abstraction reaction that results in 2,5-elimination of pyruvate from 2-succinyl-5-enolpyruvyl-6-hydroxy-3-cyclohexene-1-carboxylate (SEPHCHC) and the formation of 2-succinyl-6-hydroxy-2,4-cyclohexadiene-1-carboxylate (SHCHC). The protein is 2-succinyl-6-hydroxy-2,4-cyclohexadiene-1-carboxylate synthase of Escherichia coli O157:H7.